A 512-amino-acid chain; its full sequence is Cobyric acid synthase (512 aa).

The 181-residue stretch at 262–442 (WLRVAAIRLP…WHGLLETDRF (181 aa)) folds into the GATase cobBQ-type domain. Cysteine 343 functions as the Nucleophile in the catalytic mechanism. Histidine 434 is a catalytic residue.

The protein belongs to the CobB/CobQ family. CobQ subfamily.

Its pathway is cofactor biosynthesis; adenosylcobalamin biosynthesis. In terms of biological role, catalyzes amidations at positions B, D, E, and G on adenosylcobyrinic A,C-diamide. NH(2) groups are provided by glutamine, and one molecule of ATP is hydrogenolyzed for each amidation. The protein is Cobyric acid synthase of Rhodococcus jostii (strain RHA1).